Here is a 443-residue protein sequence, read N- to C-terminus: Chorionicgonadotropic hormone-like protein (443 aa).

Positions 263–286 (RCAGRPCPRRHRRPCNASKSHRPM) are enriched in basic residues. Residues 263-292 (RCAGRPCPRRHRRPCNASKSHRPMRMQQRD) form a disordered region.

This sequence to mammalian CGHB.

The protein localises to the secreted. It localises to the cell wall. Cell wall protein that resembles the beta subunit of human chorionic gonadotropin. Stimulates growth and change in morphology. This Stenotrophomonas maltophilia (Pseudomonas maltophilia) protein is Chorionicgonadotropic hormone-like protein (xcg).